Reading from the N-terminus, the 375-residue chain is MQIYKVGGAVRDRLLGRPVSDVDWLVVGATVEQMQAQGFRPVGADFPVFLHPKTGEEYALARTERKSGRGYGGFTFHASPDVTLEEDLIRRDLTINAMAEDEHGDLHDPYHGKTDLDQRILRHVSLAFAEDPLRVLRVARFAARYAPMGFRVADETLELMRQISASGELLALTAERSWKEIERALMEDQPQVFIEVLRACGALKELMPEVDALFHGEVSQGSHALDVLQQAAAQQQPLAVRWACLLLALGGKQIKTVNQRFKAPRECQELAILVGEFHEQGHRAMELAPEMLLDLLQKFDVYRRPQRFEEFIEACRMDALLGGRDYPQSEYLRGAAATARAVDVKPLMESGLTGQALGGALKAARLSALQAYKAR.

ATP-binding residues include Gly-8 and Arg-11. Gly-8 and Arg-11 together coordinate CTP. Mg(2+) contacts are provided by Asp-21 and Asp-23. The ATP site is built by Arg-91, Arg-137, and Arg-140. Residues Arg-91, Arg-137, and Arg-140 each coordinate CTP.

The protein belongs to the tRNA nucleotidyltransferase/poly(A) polymerase family. Bacterial CCA-adding enzyme type 2 subfamily. Mg(2+) is required as a cofactor.

The enzyme catalyses a tRNA precursor + 2 CTP + ATP = a tRNA with a 3' CCA end + 3 diphosphate. It carries out the reaction a tRNA with a 3' CCA end + 2 CTP + ATP = a tRNA with a 3' CCACCA end + 3 diphosphate. Functionally, catalyzes the addition and repair of the essential 3'-terminal CCA sequence in tRNAs without using a nucleic acid template. Adds these three nucleotides in the order of C, C, and A to the tRNA nucleotide-73, using CTP and ATP as substrates and producing inorganic pyrophosphate. tRNA 3'-terminal CCA addition is required both for tRNA processing and repair. Also involved in tRNA surveillance by mediating tandem CCA addition to generate a CCACCA at the 3' terminus of unstable tRNAs. While stable tRNAs receive only 3'-terminal CCA, unstable tRNAs are marked with CCACCA and rapidly degraded. The chain is CCA-adding enzyme from Pseudomonas entomophila (strain L48).